We begin with the raw amino-acid sequence, 441 residues long: Histidine--tRNA ligase (441 aa).

This sequence belongs to the class-II aminoacyl-tRNA synthetase family. In terms of assembly, homodimer.

It is found in the cytoplasm. The catalysed reaction is tRNA(His) + L-histidine + ATP = L-histidyl-tRNA(His) + AMP + diphosphate + H(+). The protein is Histidine--tRNA ligase of Koribacter versatilis (strain Ellin345).